Reading from the N-terminus, the 311-residue chain is MPKVRTKDIIEQFQLELVSGAEGIYRPITTSDLSRPGIEMAGYFAYYPAERLQLLGRTELSFYETLTPEEKKSRMERLCTDITPGIIVSRGLEVPPELIEASERQSVPVMRSTMKTTRLSSRLTNYLESKLAPTTAVHGVLVDVYGVGVLITGKSGVGKSETALELVKRGHRLVADDCVEIRQEDEDTLVGSAPELIEHLLEIRGLGIINMMTLFGAGAVRTHKRISLVVDLELWDPEKQYDRLGLEEEKVKILDTELPKLTIPVRPGRNLAVIVEVAAMNFRLKRLGVNAAEEFSARLSDAIEDGAHDYD.

Catalysis depends on residues histidine 138 and lysine 159. 153 to 160 (GKSGVGKS) provides a ligand contact to ATP. Serine 160 contributes to the Mg(2+) binding site. The active-site Proton acceptor; for phosphorylation activity. Proton donor; for dephosphorylation activity is aspartate 177. The tract at residues 201 to 210 (LEIRGLGIIN) is important for the catalytic mechanism of both phosphorylation and dephosphorylation. Glutamate 202 is a Mg(2+) binding site. Arginine 243 is a catalytic residue. The segment at 264–269 (PVRPGR) is important for the catalytic mechanism of dephosphorylation.

The protein belongs to the HPrK/P family. Homohexamer. Mg(2+) is required as a cofactor.

It catalyses the reaction [HPr protein]-L-serine + ATP = [HPr protein]-O-phospho-L-serine + ADP + H(+). The enzyme catalyses [HPr protein]-O-phospho-L-serine + phosphate + H(+) = [HPr protein]-L-serine + diphosphate. Its function is as follows. Catalyzes the ATP- as well as the pyrophosphate-dependent phosphorylation of a specific serine residue in HPr, a phosphocarrier protein of the phosphoenolpyruvate-dependent sugar phosphotransferase system (PTS). HprK/P also catalyzes the pyrophosphate-producing, inorganic phosphate-dependent dephosphorylation (phosphorolysis) of seryl-phosphorylated HPr (P-Ser-HPr). The two antagonistic activities of HprK/P are regulated by several intracellular metabolites, which change their concentration in response to the absence or presence of rapidly metabolisable carbon sources (glucose, fructose, etc.) in the growth medium. Also phosphorylates/dephosphorylates the HPr-like catabolite repression protein crh on a specific serine residue. Therefore, by controlling the phosphorylation state of HPr and crh, HPrK/P is a sensor enzyme that plays a major role in the regulation of carbon metabolism and sugar transport: it mediates carbon catabolite repression (CCR), and regulates PTS-catalyzed carbohydrate uptake and inducer exclusion. The sequence is that of HPr kinase/phosphorylase from Geobacillus kaustophilus (strain HTA426).